We begin with the raw amino-acid sequence, 417 residues long: D-amino acid dehydrogenase (417 aa).

3-17 contributes to the FAD binding site; that stretch reads IIVLGAGVIGVTSAY.

Belongs to the DadA oxidoreductase family. Requires FAD as cofactor.

It carries out the reaction a D-alpha-amino acid + A + H2O = a 2-oxocarboxylate + AH2 + NH4(+). The protein operates within amino-acid degradation; D-alanine degradation; NH(3) and pyruvate from D-alanine: step 1/1. Its function is as follows. Oxidative deamination of D-amino acids. This is D-amino acid dehydrogenase from Azorhizobium caulinodans (strain ATCC 43989 / DSM 5975 / JCM 20966 / LMG 6465 / NBRC 14845 / NCIMB 13405 / ORS 571).